The chain runs to 507 residues: Glycine, alanine and asparagine-rich protein (507 aa).

The first 17 residues, 1–17 (MLRVPLLVLCLALSVGA), serve as a signal peptide directing secretion. The stretch at 158–185 (SAQALASATAELQAAQDAYDQASAYAEA) forms a coiled coil. The span at 462-498 (GNGNGGNGRNGNGGNGRNGNGGNGGNGNGRNGRGGRY) shows a compositional bias: gly residues. Positions 462–507 (GNGNGGNGRNGNGGNGRNGNGGNGGNGNGRNGRGGRYYYGSSDYYY) are disordered.

As to expression, component of the acid-soluble and acid-insoluble organic matrix of calcified shell layers (at protein level).

The protein localises to the secreted. This chain is Glycine, alanine and asparagine-rich protein, found in Haliotis asinina (Donkey's ear abalone).